The following is a 36-amino-acid chain: Serine protease inhibitor 2 (36 aa).

A Pacifastin domain is found at 1 to 36; sequence EISCEPGTTFQDKCNTCRCGKDGKSAAGCTLKACPQ. 3 disulfide bridges follow: C4/C19, C14/C34, and C17/C29.

Belongs to the protease inhibitor I19 family. In terms of tissue distribution, expressed in hemolymph.

It is found in the secreted. Functionally, probable serine protease inhibitor. The protein is Serine protease inhibitor 2 of Melanoplus sanguinipes (Migratory grasshopper).